A 41-amino-acid polypeptide reads, in one-letter code: Large ribosomal subunit protein bL36 (41 aa).

Belongs to the bacterial ribosomal protein bL36 family.

The chain is Large ribosomal subunit protein bL36 from Neisseria gonorrhoeae (strain ATCC 700825 / FA 1090).